The following is a 113-amino-acid chain: Protein USP2 (113 aa).

The signal sequence occupies residues 1-18 (MKITMFFAALSAASGVFA). A run of 6 repeats spans residues 32–37 (IGAGVG), 40–45 (IGAGVG), 46–49 (SYGY), 50–53 (PYGA), 59–65 (LQLLPLR), and 69–75 (LRRLPLR). The tract at residues 32–45 (IGAGVGIGIGAGVG) is 2 X 6 AA repeats. Residues 46 to 53 (SYGYPYGA) are 2 X 4 AA approximate tandem repeats. Positions 59 to 75 (LQLLPLRWLPLRRLPLR) are 2 X 7 AA approximate repeats.

It localises to the secreted. This chain is Protein USP2 (USP2), found in Puccinia graminis (Black stem rust fungus).